The sequence spans 498 residues: DEAD-box ATP-dependent RNA helicase 12 (498 aa).

The segment at 1-114 is disordered; sequence MNTNRGRYPP…RLPPPDTRYQ (114 aa). Low complexity predominate over residues 27 to 65; the sequence is SYRQQQPPQDQQYVQRGYSQNPQQMQLQQQHQQQQQQQQ. A compositionally biased stretch (polar residues) spans 74–96; that stretch reads GNASNANEVVQQTTQPEASSDAN. The Q motif signature appears at 124–152; it reads NEFEDYFLKRDLLKGIYEKGFEKPSPIQE. A Helicase ATP-binding domain is found at 155–325; sequence IPIALTGSDI…DRHLRKPYVI (171 aa). ATP is bound at residue 168–175; that stretch reads AKNGTGKT. A Phosphothreonine modification is found at Thr230. The DEAD box signature appears at 273-276; the sequence is DEAD. Positions 335–495 constitute a Helicase C-terminal domain; sequence GVTQYYAFVE…PIPSNIDQAI (161 aa).

The protein belongs to the DEAD box helicase family. DDX6/DHH1 subfamily.

It localises to the cytoplasm. The protein resides in the P-body. It catalyses the reaction ATP + H2O = ADP + phosphate + H(+). Its function is as follows. ATP-dependent RNA helicase involved in mRNA turnover, and more specifically in mRNA decapping. The chain is DEAD-box ATP-dependent RNA helicase 12 (RH12) from Arabidopsis thaliana (Mouse-ear cress).